The primary structure comprises 476 residues: ATP synthase subunit beta (476 aa).

152 to 159 (GGAGVGKT) contributes to the ATP binding site.

It belongs to the ATPase alpha/beta chains family. F-type ATPases have 2 components, CF(1) - the catalytic core - and CF(0) - the membrane proton channel. CF(1) has five subunits: alpha(3), beta(3), gamma(1), delta(1), epsilon(1). CF(0) has three main subunits: a(1), b(2) and c(9-12). The alpha and beta chains form an alternating ring which encloses part of the gamma chain. CF(1) is attached to CF(0) by a central stalk formed by the gamma and epsilon chains, while a peripheral stalk is formed by the delta and b chains.

It localises to the cell inner membrane. It carries out the reaction ATP + H2O + 4 H(+)(in) = ADP + phosphate + 5 H(+)(out). In terms of biological role, produces ATP from ADP in the presence of a proton gradient across the membrane. The catalytic sites are hosted primarily by the beta subunits. The sequence is that of ATP synthase subunit beta from Granulibacter bethesdensis (strain ATCC BAA-1260 / CGDNIH1).